A 432-amino-acid chain; its full sequence is Trigger factor (432 aa).

Residues 161–246 enclose the PPIase FKBP-type domain; it reads GSRATIDFVG…LNKVEARELP (86 aa).

The protein belongs to the FKBP-type PPIase family. Tig subfamily.

The protein resides in the cytoplasm. The enzyme catalyses [protein]-peptidylproline (omega=180) = [protein]-peptidylproline (omega=0). In terms of biological role, involved in protein export. Acts as a chaperone by maintaining the newly synthesized protein in an open conformation. Functions as a peptidyl-prolyl cis-trans isomerase. The chain is Trigger factor from Vibrio atlanticus (strain LGP32) (Vibrio splendidus (strain Mel32)).